The sequence spans 303 residues: tRNA dimethylallyltransferase (303 aa).

Residue 9–16 participates in ATP binding; sequence GPTASGKS. 11–16 provides a ligand contact to substrate; the sequence is TASGKS. The interaction with substrate tRNA stretch occupies residues 34-37; that stretch reads DSKQ.

Belongs to the IPP transferase family. Monomer. The cofactor is Mg(2+).

It carries out the reaction adenosine(37) in tRNA + dimethylallyl diphosphate = N(6)-dimethylallyladenosine(37) in tRNA + diphosphate. In terms of biological role, catalyzes the transfer of a dimethylallyl group onto the adenine at position 37 in tRNAs that read codons beginning with uridine, leading to the formation of N6-(dimethylallyl)adenosine (i(6)A). The polypeptide is tRNA dimethylallyltransferase (Ehrlichia chaffeensis (strain ATCC CRL-10679 / Arkansas)).